The primary structure comprises 225 residues: Phosphoglycolate phosphatase (225 aa).

The active-site Nucleophile is the D11. Mg(2+) contacts are provided by D11 and D13. K153 contacts substrate. D176 and D180 together coordinate Mg(2+).

This sequence belongs to the archaeal SPP-like hydrolase family. Requires Mg(2+) as cofactor.

It catalyses the reaction 2-phosphoglycolate + H2O = glycolate + phosphate. Its function is as follows. Catalyzes the dephosphorylation of 2-phosphoglycolate. This chain is Phosphoglycolate phosphatase, found in Halobacterium salinarum (strain ATCC 29341 / DSM 671 / R1).